A 189-amino-acid chain; its full sequence is Resolvase (189 aa).

One can recognise a Resolvase/invertase-type recombinase catalytic domain in the interval 1–139 (MLVGYARVST…EGLRSAKARG (139 aa)). S9 (O-(5'-phospho-DNA)-serine intermediate) is an active-site residue. The disordered stretch occupies residues 130–151 (EGLRSAKARGRNGGRPSKRNDK). The H-T-H motif DNA-binding region spans 165-184 (IVDIVKQTELSRATVYRILK).

It belongs to the site-specific recombinase resolvase family.

In terms of biological role, a likely role for the res protein would be to stabilize pCP13 by reducing the number of plasmid multimers resulting from homologous recombination. The polypeptide is Resolvase (res) (Clostridium perfringens (strain 13 / Type A)).